Here is a 383-residue protein sequence, read N- to C-terminus: Lipid-A-disaccharide synthase (383 aa).

It belongs to the LpxB family.

The catalysed reaction is a lipid X + a UDP-2-N,3-O-bis[(3R)-3-hydroxyacyl]-alpha-D-glucosamine = a lipid A disaccharide + UDP + H(+). It participates in bacterial outer membrane biogenesis; LPS lipid A biosynthesis. Its function is as follows. Condensation of UDP-2,3-diacylglucosamine and 2,3-diacylglucosamine-1-phosphate to form lipid A disaccharide, a precursor of lipid A, a phosphorylated glycolipid that anchors the lipopolysaccharide to the outer membrane of the cell. This Alcanivorax borkumensis (strain ATCC 700651 / DSM 11573 / NCIMB 13689 / SK2) protein is Lipid-A-disaccharide synthase.